Reading from the N-terminus, the 156-residue chain is Cytochrome c-type biogenesis protein CcmE (156 aa).

Topologically, residues Met1 to Arg16 are cytoplasmic. Residues Leu17–Ala37 traverse the membrane as a helical; Signal-anchor for type II membrane protein segment. Over Leu38 to Lys156 the chain is Periplasmic. The heme site is built by His131 and Tyr135.

This sequence belongs to the CcmE/CycJ family.

It localises to the cell inner membrane. Its function is as follows. Heme chaperone required for the biogenesis of c-type cytochromes. Transiently binds heme delivered by CcmC and transfers the heme to apo-cytochromes in a process facilitated by CcmF and CcmH. The protein is Cytochrome c-type biogenesis protein CcmE of Novosphingobium aromaticivorans (strain ATCC 700278 / DSM 12444 / CCUG 56034 / CIP 105152 / NBRC 16084 / F199).